A 446-amino-acid chain; its full sequence is tRNA-2-methylthio-N(6)-dimethylallyladenosine synthase (446 aa).

Residues 3–120 form the MTTase N-terminal domain; it reads KKIYIKTFGC…LPEMLKQRRS (118 aa). Residues C12, C49, C83, C157, C161, and C164 each coordinate [4Fe-4S] cluster. Residues 143–375 form the Radical SAM core domain; the sequence is KVEGATAFVS…QAVIDQNTRR (233 aa). Residues 378-444 form the TRAM domain; that stretch reads DEMVGSVQRI…AYTLRGEIVV (67 aa).

This sequence belongs to the methylthiotransferase family. MiaB subfamily. In terms of assembly, monomer. [4Fe-4S] cluster is required as a cofactor.

The protein localises to the cytoplasm. It catalyses the reaction N(6)-dimethylallyladenosine(37) in tRNA + (sulfur carrier)-SH + AH2 + 2 S-adenosyl-L-methionine = 2-methylsulfanyl-N(6)-dimethylallyladenosine(37) in tRNA + (sulfur carrier)-H + 5'-deoxyadenosine + L-methionine + A + S-adenosyl-L-homocysteine + 2 H(+). Functionally, catalyzes the methylthiolation of N6-(dimethylallyl)adenosine (i(6)A), leading to the formation of 2-methylthio-N6-(dimethylallyl)adenosine (ms(2)i(6)A) at position 37 in tRNAs that read codons beginning with uridine. In Herminiimonas arsenicoxydans, this protein is tRNA-2-methylthio-N(6)-dimethylallyladenosine synthase.